The primary structure comprises 28 residues: Short cationic peptide-1c (28 aa).

At E28 the chain carries Glutamic acid 1-amide.

Expressed by the venom gland.

Its subcellular location is the secreted. The protein is Short cationic peptide-1c of Cupiennius salei (American wandering spider).